The following is a 59-amino-acid chain: Cecropin-C type 1 (59 aa).

Positions 1-23 (MNFTKIFVLIAMAALLLVGQSEA) are cleaved as a signal peptide.

The protein localises to the secreted. Its function is as follows. Cecropins have lytic and antibacterial activity against several Gram-positive and Gram-negative bacteria. This chain is Cecropin-C type 1 (CECC1), found in Aedes albopictus (Asian tiger mosquito).